Here is a 484-residue protein sequence, read N- to C-terminus: Cathepsin F (484 aa).

The signal sequence occupies residues 1–19; the sequence is MAPWLQLLSLLGLLPGAVA. Positions 20 to 270 are cleaved as a propeptide — activation peptide; it reads APAQPRAASF…MKQAKSVGDL (251 aa). Residues asparagine 160 and asparagine 195 are each glycosylated (N-linked (GlcNAc...) asparagine). Intrachain disulfides connect cysteine 292/cysteine 333 and cysteine 326/cysteine 366. The active site involves cysteine 295. Asparagine 367 and asparagine 378 each carry an N-linked (GlcNAc...) asparagine glycan. Cysteines 424 and 472 form a disulfide. Histidine 431 is a catalytic residue. Residue asparagine 440 is glycosylated (N-linked (GlcNAc...) asparagine). Asparagine 451 is an active-site residue.

It belongs to the peptidase C1 family. As to expression, high expression levels in heart, skeletal muscle, brain, testis and ovary; moderate levels in prostate, placenta, liver and colon; and no detectable expression in peripheral leukocytes and thymus.

The protein resides in the lysosome. It catalyses the reaction The recombinant enzyme cleaves synthetic substrates with Phe and Leu (better than Val) in P2, with high specificity constant (kcat/Km) comparable to that of cathepsin L.. Thiol protease which is believed to participate in intracellular degradation and turnover of proteins. Has also been implicated in tumor invasion and metastasis. This is Cathepsin F (CTSF) from Homo sapiens (Human).